The chain runs to 314 residues: tRNA pseudouridine synthase B (314 aa).

His-43 serves as a coordination point for substrate. Asp-48 (nucleophile) is an active-site residue. Substrate is bound by residues Tyr-76, Tyr-179, and Leu-200.

It belongs to the pseudouridine synthase TruB family. Type 1 subfamily.

It carries out the reaction uridine(55) in tRNA = pseudouridine(55) in tRNA. Responsible for synthesis of pseudouridine from uracil-55 in the psi GC loop of transfer RNAs. The sequence is that of tRNA pseudouridine synthase B from Serratia proteamaculans (strain 568).